The sequence spans 302 residues: Large ribosomal subunit protein uL29m (302 aa).

Residues 1–38 (MASSGAARPAASRVLQRCQPFSSSTSCAAPVTTWRTLA) constitute a mitochondrion transit peptide. Positions 255 to 302 (EPVADHLETPETSGQEKVGELSPAGAVDPSTILASKTGKPVTDAPRSS) are disordered.

It belongs to the universal ribosomal protein uL29 family. Component of the mitochondrial large ribosomal subunit. Mature mitochondrial ribosomes consist of a small (37S) and a large (54S) subunit. The 37S subunit contains at least 33 different proteins and 1 molecule of RNA (15S). The 54S subunit contains at least 45 different proteins and 1 molecule of RNA (21S).

It is found in the mitochondrion. The chain is Large ribosomal subunit protein uL29m (MRPL4) from Pyricularia oryzae (strain 70-15 / ATCC MYA-4617 / FGSC 8958) (Rice blast fungus).